A 239-amino-acid polypeptide reads, in one-letter code: Ribonuclease 3 (239 aa).

One can recognise an RNase III domain in the interval 11–133 (HTAIQKKLGY…MFAAVSFDAD (123 aa)). Residue E46 participates in Mg(2+) binding. Residue D50 is part of the active site. Residues D119 and E122 each coordinate Mg(2+). E122 is an active-site residue. Residues 160–230 (DGKTALQEAL…AKEALKWLEE (71 aa)) enclose the DRBM domain.

It belongs to the ribonuclease III family. Homodimer. Mg(2+) serves as cofactor.

Its subcellular location is the cytoplasm. The enzyme catalyses Endonucleolytic cleavage to 5'-phosphomonoester.. Its function is as follows. Digests double-stranded RNA. Involved in the processing of primary rRNA transcript to yield the immediate precursors to the large and small rRNAs (23S and 16S). Processes some mRNAs, and tRNAs when they are encoded in the rRNA operon. Processes pre-crRNA and tracrRNA of type II CRISPR loci if present in the organism. The sequence is that of Ribonuclease 3 from Neisseria gonorrhoeae (strain NCCP11945).